The sequence spans 194 residues: Ribosomal RNA large subunit methyltransferase E (194 aa).

S-adenosyl-L-methionine-binding residues include glycine 48, tryptophan 50, aspartate 66, asparagine 82, and aspartate 110. Lysine 150 functions as the Proton acceptor in the catalytic mechanism.

The protein belongs to the class I-like SAM-binding methyltransferase superfamily. RNA methyltransferase RlmE family.

It localises to the cytoplasm. It carries out the reaction uridine(2552) in 23S rRNA + S-adenosyl-L-methionine = 2'-O-methyluridine(2552) in 23S rRNA + S-adenosyl-L-homocysteine + H(+). In terms of biological role, specifically methylates the uridine in position 2552 of 23S rRNA at the 2'-O position of the ribose in the fully assembled 50S ribosomal subunit. This is Ribosomal RNA large subunit methyltransferase E from Picrophilus torridus (strain ATCC 700027 / DSM 9790 / JCM 10055 / NBRC 100828 / KAW 2/3).